A 155-amino-acid chain; its full sequence is Small ribosomal subunit protein bS16 (155 aa).

Residues 113–155 (ADGAPTGEAIQQKKKKAPKKAEAAEAEAPAEEPAAESADAASE) form a disordered region. The span at 136–146 (AEAEAPAEEPA) shows a compositional bias: acidic residues.

It belongs to the bacterial ribosomal protein bS16 family.

The polypeptide is Small ribosomal subunit protein bS16 (Mycobacteroides abscessus (strain ATCC 19977 / DSM 44196 / CCUG 20993 / CIP 104536 / JCM 13569 / NCTC 13031 / TMC 1543 / L948) (Mycobacterium abscessus)).